The following is a 416-amino-acid chain: Glutamyl-tRNA reductase (416 aa).

Residues 49 to 52, Ser-105, 110 to 112, and Gln-116 each bind substrate; these read TCNR and EPQ. Residue Cys-50 is the Nucleophile of the active site. 185-190 serves as a coordination point for NADP(+); sequence GAGETI.

Belongs to the glutamyl-tRNA reductase family. Homodimer.

It catalyses the reaction (S)-4-amino-5-oxopentanoate + tRNA(Glu) + NADP(+) = L-glutamyl-tRNA(Glu) + NADPH + H(+). The protein operates within porphyrin-containing compound metabolism; protoporphyrin-IX biosynthesis; 5-aminolevulinate from L-glutamyl-tRNA(Glu): step 1/2. In terms of biological role, catalyzes the NADPH-dependent reduction of glutamyl-tRNA(Glu) to glutamate 1-semialdehyde (GSA). The protein is Glutamyl-tRNA reductase of Shewanella pealeana (strain ATCC 700345 / ANG-SQ1).